The sequence spans 473 residues: Ribulose bisphosphate carboxylase large chain (473 aa).

Substrate is bound by residues Asn116 and Thr166. Lys168 (proton acceptor) is an active-site residue. Lys170 serves as a coordination point for substrate. Residues Lys194, Asp196, and Glu197 each contribute to the Mg(2+) site. N6-carboxylysine is present on Lys194. His287 serves as the catalytic Proton acceptor. Residues Arg288, His320, and Ser372 each contribute to the substrate site.

The protein belongs to the RuBisCO large chain family. Type I subfamily. In terms of assembly, heterohexadecamer of 8 large chains and 8 small chains. Mg(2+) serves as cofactor.

The catalysed reaction is 2 (2R)-3-phosphoglycerate + 2 H(+) = D-ribulose 1,5-bisphosphate + CO2 + H2O. The enzyme catalyses D-ribulose 1,5-bisphosphate + O2 = 2-phosphoglycolate + (2R)-3-phosphoglycerate + 2 H(+). In terms of biological role, ruBisCO catalyzes two reactions: the carboxylation of D-ribulose 1,5-bisphosphate, the primary event in carbon dioxide fixation, as well as the oxidative fragmentation of the pentose substrate. Both reactions occur simultaneously and in competition at the same active site. The protein is Ribulose bisphosphate carboxylase large chain of Rhodobacter capsulatus (strain ATCC BAA-309 / NBRC 16581 / SB1003).